Consider the following 613-residue polypeptide: Carotenoid dioxygenase (613 aa).

The segment at 1–25 (MSPHEVIGTVPKNSTTFRTQADEHD) is disordered. Positions 261, 313, 383, and 595 each coordinate Fe(2+).

Belongs to the carotenoid oxygenase family. It depends on Fe(2+) as a cofactor.

It is found in the cytoplasm. Its subcellular location is the cytosol. It carries out the reaction torulene + O2 = 4'-apo-beta-carotenal + 3-methyl-2-butenal. The protein operates within carotenoid biosynthesis. Functionally, torulene dioxygenase; part of pathway that mediates the biosynthesis of neurosporaxanthin, a carboxylic apocarotenoid acting as an essential protective pigments and leading to orange pigmentation. Cao-2 mediates the cleavage of torulene into beta-apo-4'-carotenal, the aldehyde corresponding to the acidic neurosporaxanthin. Is not able to use gamma-carotene (that it is not desaturated at the C4'-C5' bond) as substrate, which suggests a high specificity of cao-2 in cleaving the C4'-C5' double bond. Neurosporaxanthin is synthesized from geranyl-geranyl pyrophosphate (GGPP) through several enzymatic activities. Phytoene synthase activity performed by the bifunctional enzyme al-2 first produces phytoene from geranyl-geranyl pyrophosphate (GGPP). The phytoene dehydrogenase al-1 then introduces 5 desaturations to lead to 3,4-didehydrolycopene via the intermediates phytofluene, zeta-carotene, neurosporene and lycopene. Al-2 cyclase activity then converts 3,4-didehydrolycopene into torulene. Al-2 can also convet lycopene into gamma-carotene which in turn is converted to beta-carotene by an additional al-2 cyclization reaction. Torulene is the substrate of the dioxidase cao-2 that breaks the molecule, removing five carbon atoms to yield beta-apo-4'-carotenal, whereas the aldehyde dehydrogenase ylo-1 mediates the last step by converting beta-apo-4'-carotenal into neurosporaxanthin. This Neurospora crassa (strain ATCC 24698 / 74-OR23-1A / CBS 708.71 / DSM 1257 / FGSC 987) protein is Carotenoid dioxygenase.